The chain runs to 419 residues: MVDAPHSKCGTFGFVGSSPTAPTFLLDTYKRLPLKIVKGNGCWLWDETGKKYLDAVAGIATCSLGHSDKKLSKVLSQQLRKIQHVSNLYRIPEQEDLAQWLVNQSCADSVFFCNSGAEANEAAIKLARKYGQIKRGIKRPIILSAKSSFHGRTLAALSATGQTKYQKGFEPLVEGFEFFSFNDSNSVQDLYENLEKDEPRVAAILIEPIQGEGGLNLGDQKFFYFLRDYCNKNNILLLFDEVQSGMGRTGKLWGYEHFNVEPDAFTLAKGLGGGHSIGALLVKENASIFEPGDHASTFGGNPFACKAGLTVAKEIQNRNLLENTYCRGNQLREGLQKLINNYPHHLEEVRGIGLMLGLAIKKNSNLTSQKIVELAIKEGLLVIGAGEKVIRMLPPLIITKREIETLLTRLNACFRKLNN.

Pyridoxal 5'-phosphate is bound by residues 116–117 (GA) and phenylalanine 149. Arginine 152 lines the N(2)-acetyl-L-ornithine pocket. Residue 240 to 243 (DEVQ) participates in pyridoxal 5'-phosphate binding. The residue at position 269 (lysine 269) is an N6-(pyridoxal phosphate)lysine. Serine 296 is a N(2)-acetyl-L-ornithine binding site. Threonine 297 lines the pyridoxal 5'-phosphate pocket.

This sequence belongs to the class-III pyridoxal-phosphate-dependent aminotransferase family. ArgD subfamily. In terms of assembly, homodimer. Pyridoxal 5'-phosphate serves as cofactor.

The protein localises to the cytoplasm. The catalysed reaction is N(2)-acetyl-L-ornithine + 2-oxoglutarate = N-acetyl-L-glutamate 5-semialdehyde + L-glutamate. The protein operates within amino-acid biosynthesis; L-arginine biosynthesis; N(2)-acetyl-L-ornithine from L-glutamate: step 4/4. The sequence is that of Acetylornithine aminotransferase from Prochlorococcus marinus (strain SARG / CCMP1375 / SS120).